Here is a 964-residue protein sequence, read N- to C-terminus: Lon protease homolog, mitochondrial (964 aa).

The Lon N-terminal domain maps to 89 to 300 (VIALPLPHRP…LTLELVKKEM (212 aa)). Position 455-462 (455-462 (GPPGVGKT)) interacts with ATP. Positions 663–740 (GVSNEPDHES…TSKGNKGTDG (78 aa)) are disordered. Positions 673–687 (VSASVTEESGNGDNT) are enriched in polar residues. Basic and acidic residues predominate over residues 688 to 698 (TTKDEILKDPA). Residues 703-712 (SVTNNVTNPA) are compositionally biased toward polar residues. Residues 773–957 (HTPVGVVMGL…SEIYDLAFQS (185 aa)) form the Lon proteolytic domain. Residues Ser863 and Lys906 contribute to the active site.

It belongs to the peptidase S16 family. Homoheptamer. Organized in a ring with a central cavity.

Its subcellular location is the mitochondrion matrix. The catalysed reaction is Hydrolysis of proteins in presence of ATP.. ATP-dependent serine protease that mediates the selective degradation of misfolded, unassembled or oxidatively damaged polypeptides as well as certain short-lived regulatory proteins in the mitochondrial matrix. May also have a chaperone function in the assembly of inner membrane protein complexes. Participates in the regulation of mitochondrial gene expression and in the maintenance of the integrity of the mitochondrial genome. Binds to mitochondrial DNA in a site-specific manner. The sequence is that of Lon protease homolog, mitochondrial (LON2) from Zea mays (Maize).